The sequence spans 265 residues: tRNA pseudouridine synthase A (265 aa).

The active-site Nucleophile is aspartate 52. Tyrosine 110 is a substrate binding site. Residues 244–265 (FYRDGPPARTPGGTTDAEEDEG) are disordered.

It belongs to the tRNA pseudouridine synthase TruA family. Homodimer.

The catalysed reaction is uridine(38/39/40) in tRNA = pseudouridine(38/39/40) in tRNA. Its function is as follows. Formation of pseudouridine at positions 38, 39 and 40 in the anticodon stem and loop of transfer RNAs. The sequence is that of tRNA pseudouridine synthase A from Myxococcus xanthus.